The sequence spans 323 residues: Protoheme IX farnesyltransferase (323 aa).

The next 8 membrane-spanning stretches (helical) occupy residues 50–70 (IVLI…ANTF), 97–117 (NRDA…WLWL), 118–138 (LCDS…YIFV), 150–170 (NIVW…AVIV), 184–204 (AIVL…ALAM), 231–248 (IVWY…LIPA), 252–274 (IYAA…LHLG), and 293–313 (YLAV…ETIG).

This sequence belongs to the UbiA prenyltransferase family. Protoheme IX farnesyltransferase subfamily.

Its subcellular location is the cell membrane. The enzyme catalyses heme b + (2E,6E)-farnesyl diphosphate + H2O = Fe(II)-heme o + diphosphate. The protein operates within porphyrin-containing compound metabolism; heme O biosynthesis; heme O from protoheme: step 1/1. In terms of biological role, converts heme B (protoheme IX) to heme O by substitution of the vinyl group on carbon 2 of heme B porphyrin ring with a hydroxyethyl farnesyl side group. The protein is Protoheme IX farnesyltransferase of Corynebacterium glutamicum (strain R).